A 523-amino-acid polypeptide reads, in one-letter code: GMP synthase [glutamine-hydrolyzing] (523 aa).

In terms of domain architecture, Glutamine amidotransferase type-1 spans 8–205; it reads KILILDFGSQ…VVNICGCETK (198 aa). The Nucleophile role is filled by C85. Active-site residues include H179 and E181. Residues 206–398 enclose the GMPS ATP-PPase domain; the sequence is WTAENIIEDA…LGLPAEMINR (193 aa). Position 233-239 (233-239) interacts with ATP; the sequence is SGGVDSS.

In terms of assembly, homodimer.

It catalyses the reaction XMP + L-glutamine + ATP + H2O = GMP + L-glutamate + AMP + diphosphate + 2 H(+). Its pathway is purine metabolism; GMP biosynthesis; GMP from XMP (L-Gln route): step 1/1. Functionally, catalyzes the synthesis of GMP from XMP. The sequence is that of GMP synthase [glutamine-hydrolyzing] from Haemophilus influenzae (strain PittEE).